The sequence spans 490 residues: tRNA-guanine(15) transglycosylase (490 aa).

Asp90 functions as the Nucleophile in the catalytic mechanism. Positions 125 and 193 each coordinate substrate. Residues Cys276, Cys278, and Cys281 each contribute to the Zn(2+) site.

The protein belongs to the archaeosine tRNA-ribosyltransferase family. It depends on Zn(2+) as a cofactor.

The catalysed reaction is guanosine(15) in tRNA + 7-cyano-7-deazaguanine = 7-cyano-7-carbaguanosine(15) in tRNA + guanine. Its pathway is tRNA modification; archaeosine-tRNA biosynthesis. Its function is as follows. Exchanges the guanine residue with 7-cyano-7-deazaguanine (preQ0) at position 15 in the dihydrouridine loop (D-loop) of archaeal tRNAs. The protein is tRNA-guanine(15) transglycosylase of Methanosarcina barkeri (strain Fusaro / DSM 804).